The following is a 428-amino-acid chain: Adenylosuccinate synthetase (428 aa).

GTP-binding positions include 12 to 18 (GDEGKGK) and 40 to 42 (GHS). Residue Asp13 is the Proton acceptor of the active site. Asp13 and Gly40 together coordinate Mg(2+). Residues 13–16 (DEGK), 38–41 (NAGH), Thr128, Arg142, Gln223, Thr238, and Arg302 contribute to the IMP site. Catalysis depends on His41, which acts as the Proton donor. A substrate-binding site is contributed by 298-304 (VTTGRPR). Residues Arg304, 330-332 (KLD), and 412-414 (GTG) contribute to the GTP site.

This sequence belongs to the adenylosuccinate synthetase family. As to quaternary structure, homodimer. Mg(2+) serves as cofactor.

It is found in the cytoplasm. It catalyses the reaction IMP + L-aspartate + GTP = N(6)-(1,2-dicarboxyethyl)-AMP + GDP + phosphate + 2 H(+). The protein operates within purine metabolism; AMP biosynthesis via de novo pathway; AMP from IMP: step 1/2. Functionally, plays an important role in the de novo pathway of purine nucleotide biosynthesis. Catalyzes the first committed step in the biosynthesis of AMP from IMP. This Bifidobacterium longum (strain DJO10A) protein is Adenylosuccinate synthetase.